Consider the following 274-residue polypeptide: 3-deoxy-manno-octulosonate cytidylyltransferase (274 aa).

This sequence belongs to the KdsB family.

The protein resides in the cytoplasm. It catalyses the reaction 3-deoxy-alpha-D-manno-oct-2-ulosonate + CTP = CMP-3-deoxy-beta-D-manno-octulosonate + diphosphate. Its pathway is nucleotide-sugar biosynthesis; CMP-3-deoxy-D-manno-octulosonate biosynthesis; CMP-3-deoxy-D-manno-octulosonate from 3-deoxy-D-manno-octulosonate and CTP: step 1/1. It participates in bacterial outer membrane biogenesis; lipopolysaccharide biosynthesis. Its function is as follows. Activates KDO (a required 8-carbon sugar) for incorporation into bacterial lipopolysaccharide in Gram-negative bacteria. The sequence is that of 3-deoxy-manno-octulosonate cytidylyltransferase from Bordetella avium (strain 197N).